Consider the following 330-residue polypeptide: Ferredoxin--NADP reductase (330 aa).

FAD contacts are provided by E34, Q42, Y47, V87, F121, D285, and S325.

It belongs to the ferredoxin--NADP reductase type 2 family. In terms of assembly, homodimer. Requires FAD as cofactor.

It carries out the reaction 2 reduced [2Fe-2S]-[ferredoxin] + NADP(+) + H(+) = 2 oxidized [2Fe-2S]-[ferredoxin] + NADPH. The chain is Ferredoxin--NADP reductase from Limosilactobacillus fermentum (strain NBRC 3956 / LMG 18251) (Lactobacillus fermentum).